The sequence spans 276 residues: Dermonecrotic toxin LlSicTox-alphaIV1i (276 aa).

H5 is an active-site residue. Residues E25 and D27 each coordinate Mg(2+). Catalysis depends on H41, which acts as the Nucleophile. 2 cysteine pairs are disulfide-bonded: C45/C51 and C47/C193. D85 lines the Mg(2+) pocket.

It belongs to the arthropod phospholipase D family. Class II subfamily. It depends on Mg(2+) as a cofactor. In terms of tissue distribution, expressed by the venom gland.

The protein localises to the secreted. It catalyses the reaction an N-(acyl)-sphingosylphosphocholine = an N-(acyl)-sphingosyl-1,3-cyclic phosphate + choline. The catalysed reaction is an N-(acyl)-sphingosylphosphoethanolamine = an N-(acyl)-sphingosyl-1,3-cyclic phosphate + ethanolamine. The enzyme catalyses a 1-acyl-sn-glycero-3-phosphocholine = a 1-acyl-sn-glycero-2,3-cyclic phosphate + choline. It carries out the reaction a 1-acyl-sn-glycero-3-phosphoethanolamine = a 1-acyl-sn-glycero-2,3-cyclic phosphate + ethanolamine. Functionally, dermonecrotic toxins cleave the phosphodiester linkage between the phosphate and headgroup of certain phospholipids (sphingolipid and lysolipid substrates), forming an alcohol (often choline) and a cyclic phosphate. This toxin acts on sphingomyelin (SM). It may also act on ceramide phosphoethanolamine (CPE), lysophosphatidylcholine (LPC) and lysophosphatidylethanolamine (LPE), but not on lysophosphatidylserine (LPS), and lysophosphatidylglycerol (LPG). It acts by transphosphatidylation, releasing exclusively cyclic phosphate products as second products. Induces dermonecrosis, hemolysis, increased vascular permeability, edema, inflammatory response, and platelet aggregation. This is Dermonecrotic toxin LlSicTox-alphaIV1i from Loxosceles laeta (South American recluse spider).